We begin with the raw amino-acid sequence, 922 residues long: Chaperone protein ClpC, chloroplastic (922 aa).

Residues 1–72 (MARVLAQSLS…RPGLDFHSKV (72 aa)) constitute a chloroplast transit peptide. The Clp R domain maps to 92-234 (FERFTEKAIK…RTQVIRMVGE (143 aa)). Repeat regions lie at residues 95–160 (FTEK…IGRG) and 170–234 (FTPR…MVGE). The tract at residues 255–502 (LEEYGTNLTK…RVRLQHAQLP (248 aa)) is i. Position 300 to 307 (300 to 307 (GEPGVGKT)) interacts with ATP. In terms of domain architecture, UVR spans 509-544 (DKEVRKIVKEKEEYVRNQDFEKAGELRDKEMDLKAQ). An II region spans residues 569–760 (VTEVDIQHIV…LLIMTSNVGS (192 aa)). Position 643 to 650 (643 to 650 (GPTGVGKS)) interacts with ATP.

Belongs to the ClpA/ClpB family. ClpC subfamily.

Its subcellular location is the plastid. The protein resides in the chloroplast. In terms of biological role, molecular chaperone that may interact with a ClpP-like protease involved in degradation of denatured proteins in the chloroplast. This Pisum sativum (Garden pea) protein is Chaperone protein ClpC, chloroplastic.